Consider the following 327-residue polypeptide: Protein MRG2 (327 aa).

A disordered region spans residues 1-40; that stretch reads MGSPNAAAETDLTTDDFIGDTRRDSGSDTETNTDCDGEDL. The Tudor-knot domain occupies 52 to 101; that stretch reads FEEGERVLAKHSDCFYEAKVLKVEFKDNEWKYFVHYIGWNKSWDEWIRLD. Residues 133-156 form a disordered region; it reads SKMKPRSPNVARGRKRKQDSVDTE. An MRG domain is found at 162 to 327; it reads SDNLLSFNIP…AVEEMEKKEG (166 aa).

Interacts with HAM1 and HAM2. Interacts (via MRG domain) with CO. Component of the NuA4 histone acetyltransferase complex. As to expression, ubiquitous. Mainly expressed in the vasculature of cotyledons and leaves, and in roots and inflorescences.

It localises to the nucleus. In terms of biological role, chromatin remodeling factor. Acts as a 'reader' protein by binding to H3K4me3 and H3K36me3 to control histone H4 acetylation. Increases the transcriptional levels of the flowering time genes FLC and FT. Binds the chromatin at the FT promoter upon interaction with CO. This chain is Protein MRG2, found in Arabidopsis thaliana (Mouse-ear cress).